Here is a 495-residue protein sequence, read N- to C-terminus: Probable plastidic glucose transporter 3 (495 aa).

Helical transmembrane passes span 55–75 (LPHVLVASLTSLLFGYHLGVV), 97–117 (LVVSTCLGGAFIGSLFSGLVA), 131–151 (LPMIVGASVSASTESLMGMLL), 154–174 (FLVGIGMGIGPSVTALYVTEV), 183–203 (YGSSTQIATCIGLLGSLFAGI), 214–234 (ICFWISTVPAAMLAVFMELCV), 294–314 (VVFIGSTLFALQQLSGINAVF), 330–350 (SANICVGVCNLLGSTVAVVLM), 357–377 (VLLIGSFAGMAVSLGLQAIAY), 384–404 (FGTLFLSVGGMLLFVLSFATG), 425–445 (ALAVCLAVHWVINFFVGLLFL), and 451–471 (LGSVLLNAIFGFFCVVAVIFV).

The protein belongs to the major facilitator superfamily. Sugar transporter (TC 2.A.1.1) family.

It localises to the plastid. It is found in the chloroplast membrane. May be involved in the efflux of glucose towards the cytosol. In Arabidopsis thaliana (Mouse-ear cress), this protein is Probable plastidic glucose transporter 3.